Here is a 148-residue protein sequence, read N- to C-terminus: Arginine repressor (148 aa).

This sequence belongs to the ArgR family.

The protein resides in the cytoplasm. It participates in amino-acid biosynthesis; L-arginine biosynthesis [regulation]. Regulates arginine biosynthesis genes. The polypeptide is Arginine repressor (Chlorobium luteolum (strain DSM 273 / BCRC 81028 / 2530) (Pelodictyon luteolum)).